Consider the following 356-residue polypeptide: Ubiquitin-conjugating enzyme E2 Z (356 aa).

The span at M1 to A16 shows a compositional bias: low complexity. Residues M1–G22 form a disordered region. The UBC core domain maps to Q101–V255. The active-site Glycyl thioester intermediate is C190. The segment at N334–V356 is disordered. S339 is modified (phosphoserine).

The protein belongs to the ubiquitin-conjugating enzyme family.

Its subcellular location is the cytoplasm. It localises to the nucleus. It carries out the reaction S-ubiquitinyl-[E1 ubiquitin-activating enzyme]-L-cysteine + [E2 ubiquitin-conjugating enzyme]-L-cysteine = [E1 ubiquitin-activating enzyme]-L-cysteine + S-ubiquitinyl-[E2 ubiquitin-conjugating enzyme]-L-cysteine.. It functions in the pathway protein modification; protein ubiquitination. In terms of biological role, catalyzes the covalent attachment of ubiquitin to other proteins. Specific substrate for UBA6, not charged with ubiquitin by UBE1. May be involved in apoptosis regulation. In Rattus norvegicus (Rat), this protein is Ubiquitin-conjugating enzyme E2 Z (Ube2z).